Reading from the N-terminus, the 541-residue chain is Interleukin-18 receptor 1 (541 aa).

The first 18 residues, 1–18 (MNCRELPLTLWVLISVST), serve as a signal peptide directing secretion. Intrachain disulfides connect Cys-22–Cys-41 and Cys-43–Cys-81. At 22–329 (CTSRPHITVV…ADIPGHVFTR (308 aa)) the chain is on the extracellular side. Ig-like C2-type domains are found at residues 33-121 (GEPF…SCFT), 133-212 (KKFF…DRSN), and 220-312 (PKLN…KSFI). N-linked (GlcNAc...) asparagine glycosylation is found at Asn-91, Asn-102, Asn-150, Asn-197, Asn-203, Asn-236, Asn-255, and Asn-297. 2 disulfides stabilise this stretch: Cys-119/Cys-158 and Cys-140/Cys-185. Cys-237 and Cys-298 are oxidised to a cystine. The chain crosses the membrane as a helical span at residues 330 to 350 (GMIIAVLILVAVVCLVTVCVI). The Cytoplasmic portion of the chain corresponds to 351 to 541 (YRVDLVLFYR…PEVLPVLSES (191 aa)). The region spanning 373-520 (KTYDAFVSYL…RFWKNLLYLM (148 aa)) is the TIR domain. Glu-455 is a catalytic residue.

This sequence belongs to the interleukin-1 receptor family. As to quaternary structure, forms a ternary complex with IL18 and IL18RAP. Within this complex, IL18R1 is involved in ligand-binding and IL18RAP in signaling leading to NF-kappa-B and JNK activation. Interacts with SLC12A3 in peritoneal macrophages; this interaction is increased by IL18 treatment. Post-translationally, N-glycosylated. N-linked glycosyl chains contribute to ligand recognition and intra-receptor interactions required for formation of an active ternary receptor complex. As to expression, highly expressed in leukocytes, spleen, lung. Also expressed, but at lower levels, in liver, small intestine, colon, prostate, thymus, placenta, and heart. Specifically coexpressed with IL18R1 in Th1 cells.

The protein localises to the membrane. It catalyses the reaction NAD(+) + H2O = ADP-D-ribose + nicotinamide + H(+). Its function is as follows. Within the IL18 receptor complex, responsible for the binding of the pro-inflammatory cytokine IL18, but not IL1A nor IL1B. Involved in IL18-mediated IFNG synthesis from T-helper 1 (Th1) cells. Contributes to IL18-induced cytokine production, either independently of SLC12A3, or as a complex with SLC12A3. This is Interleukin-18 receptor 1 from Homo sapiens (Human).